A 591-amino-acid chain; its full sequence is Aspartate--tRNA ligase (591 aa).

Residue Glu171 coordinates L-aspartate. The interval Gln195 to Lys198 is aspartate. Arg217 is a binding site for L-aspartate. ATP contacts are provided by residues Arg217–Glu219 and Gln226. His448 provides a ligand contact to L-aspartate. Glu482 lines the ATP pocket. An L-aspartate-binding site is contributed by Arg489. Gly534 to Arg537 lines the ATP pocket.

Belongs to the class-II aminoacyl-tRNA synthetase family. Type 1 subfamily. In terms of assembly, homodimer.

It is found in the cytoplasm. It catalyses the reaction tRNA(Asp) + L-aspartate + ATP = L-aspartyl-tRNA(Asp) + AMP + diphosphate. Its function is as follows. Catalyzes the attachment of L-aspartate to tRNA(Asp) in a two-step reaction: L-aspartate is first activated by ATP to form Asp-AMP and then transferred to the acceptor end of tRNA(Asp). The sequence is that of Aspartate--tRNA ligase from Aliivibrio fischeri (strain MJ11) (Vibrio fischeri).